A 447-amino-acid polypeptide reads, in one-letter code: Cysteine--tRNA ligase (447 aa).

Cys28 contributes to the Zn(2+) binding site. The short motif at 30–40 (PTVYNYIHIGN) is the 'HIGH' region element. Residues Cys211, His236, and Glu240 each coordinate Zn(2+). The 'KMSKS' region signature appears at 268 to 272 (KMSKS). Residue Lys271 participates in ATP binding.

Belongs to the class-I aminoacyl-tRNA synthetase family. In terms of assembly, monomer. It depends on Zn(2+) as a cofactor.

The protein localises to the cytoplasm. It carries out the reaction tRNA(Cys) + L-cysteine + ATP = L-cysteinyl-tRNA(Cys) + AMP + diphosphate. The protein is Cysteine--tRNA ligase of Streptococcus pyogenes serotype M3 (strain ATCC BAA-595 / MGAS315).